Reading from the N-terminus, the 356-residue chain is DNA polymerase IV (356 aa).

One can recognise a UmuC domain in the interval 7–188 (IIHIDMDAFY…IPVTKFYGVG (182 aa)). Residues Asp-11 and Asp-106 each contribute to the Mg(2+) site. The active site involves Glu-107.

This sequence belongs to the DNA polymerase type-Y family. In terms of assembly, monomer. It depends on Mg(2+) as a cofactor.

The protein resides in the cytoplasm. The enzyme catalyses DNA(n) + a 2'-deoxyribonucleoside 5'-triphosphate = DNA(n+1) + diphosphate. In terms of biological role, poorly processive, error-prone DNA polymerase involved in untargeted mutagenesis. Copies undamaged DNA at stalled replication forks, which arise in vivo from mismatched or misaligned primer ends. These misaligned primers can be extended by PolIV. Exhibits no 3'-5' exonuclease (proofreading) activity. May be involved in translesional synthesis, in conjunction with the beta clamp from PolIII. The chain is DNA polymerase IV from Listeria monocytogenes serotype 4a (strain HCC23).